The following is a 450-amino-acid chain: Tubulin alpha-3 chain (450 aa).

Gln11 serves as a coordination point for GTP. Lys40 carries the post-translational modification N6-acetyllysine. 7 residues coordinate GTP: Glu71, Ser140, Gly144, Thr145, Thr179, Asn206, and Asn228. Glu71 contacts Mg(2+). The active site involves Glu254.

This sequence belongs to the tubulin family. As to quaternary structure, dimer of alpha and beta chains. A typical microtubule is a hollow water-filled tube with an outer diameter of 25 nm and an inner diameter of 15 nM. Alpha-beta heterodimers associate head-to-tail to form protofilaments running lengthwise along the microtubule wall with the beta-tubulin subunit facing the microtubule plus end conferring a structural polarity. Microtubules usually have 13 protofilaments but different protofilament numbers can be found in some organisms and specialized cells. It depends on Mg(2+) as a cofactor. In terms of processing, undergoes a tyrosination/detyrosination cycle, the cyclic removal and re-addition of a C-terminal tyrosine residue by the enzymes tubulin tyrosine carboxypeptidase (TTCP) and tubulin tyrosine ligase (TTL), respectively. Acetylation of alpha chains at Lys-40 stabilizes microtubules and affects affinity and processivity of microtubule motors. This modification has a role in multiple cellular functions, ranging from cell motility, cell cycle progression or cell differentiation to intracellular trafficking and signaling. During the early stages of oogenesis lky/Alpha-tubulin N-acetyltransferase 2 is the main acetyltransferase responsible for Lys-40 acetylation in germline cells while Atat/alpha-tubulin N-acetyltransferase 1 is the main acetyltransferase responsible for Lys-40 acetylation in somatic cells.

Its subcellular location is the cytoplasm. The protein localises to the cytoskeleton. It catalyses the reaction GTP + H2O = GDP + phosphate + H(+). Its function is as follows. Tubulin is the major constituent of microtubules, a cylinder consisting of laterally associated linear protofilaments composed of alpha- and beta-tubulin heterodimers. Microtubules grow by the addition of GTP-tubulin dimers to the microtubule end, where a stabilizing cap forms. Below the cap, tubulin dimers are in GDP-bound state, owing to GTPase activity of alpha-tubulin. The polypeptide is Tubulin alpha-3 chain (alphaTub84D) (Drosophila melanogaster (Fruit fly)).